The sequence spans 196 residues: Large ribosomal subunit protein eL15 (196 aa).

Composition is skewed to basic residues over residues 160 to 172 and 186 to 196; these read ATRG…RKGR and PSIRAHKSRGK. A disordered region spans residues 160–196; that stretch reads ATRGKTSAGRKGRGMSTRGKGTEKTRPSIRAHKSRGK.

Belongs to the eukaryotic ribosomal protein eL15 family.

The sequence is that of Large ribosomal subunit protein eL15 (rpl15e) from Methanosarcina mazei (strain ATCC BAA-159 / DSM 3647 / Goe1 / Go1 / JCM 11833 / OCM 88) (Methanosarcina frisia).